A 399-amino-acid chain; its full sequence is Transcription termination factor 1, mitochondrial (399 aa).

Residues 1–57 (MQSLSLGQTSISKGLNYLTIMAPGNLWHMRNNFLFGSRCWMTRFSAENIFKSVSFRL) constitute a mitochondrion transit peptide. 5 interaction with DNA regions span residues 169–170 (RS), 247–251 (QSTKR), 324–331 (AEKKFNDK), 355–358 (SIST), and 384–391 (SKKRYEAK).

This sequence belongs to the mTERF family. Monomer. In terms of processing, phosphoprotein with mostly four phosphate groups. While the DNA-binding activity is unaffected by the phosphorylation state, only the phosphorylated form of the protein is active for termination activity. Functioning seems to be regulated by phosphorylation.

It localises to the mitochondrion. Its function is as follows. Transcription termination factor. Binds to a 28 bp region within the tRNA(Leu(uur)) gene at a position immediately adjacent to and downstream of the 16S rRNA gene; this region comprises a tridecamer sequence critical for directing accurate termination. Binds DNA along the major grove and promotes DNA bending and partial unwinding. Promotes base flipping. Transcription termination activity appears to be polarized with highest specificity for transcripts initiated on the light strand. The protein is Transcription termination factor 1, mitochondrial (MTERF1) of Homo sapiens (Human).